A 364-amino-acid chain; its full sequence is 3-isopropylmalate dehydrogenase (364 aa).

79–92 (GSKWDHLPEIEKPE) is an NAD(+) binding site. Positions 100, 110, 139, and 227 each coordinate substrate. Mg(2+)-binding residues include Asp227, Asp251, and Asp255. 285–297 (GSAPNIAGKTIAN) is a binding site for NAD(+).

This sequence belongs to the isocitrate and isopropylmalate dehydrogenases family. LeuB type 1 subfamily. Homodimer. Requires Mg(2+) as cofactor. Mn(2+) serves as cofactor.

The protein localises to the cytoplasm. The enzyme catalyses (2R,3S)-3-isopropylmalate + NAD(+) = 4-methyl-2-oxopentanoate + CO2 + NADH. The protein operates within amino-acid biosynthesis; L-leucine biosynthesis; L-leucine from 3-methyl-2-oxobutanoate: step 3/4. Its function is as follows. Catalyzes the oxidation of 3-carboxy-2-hydroxy-4-methylpentanoate (3-isopropylmalate) to 3-carboxy-4-methyl-2-oxopentanoate. The product decarboxylates to 4-methyl-2 oxopentanoate. In Buchnera aphidicola subsp. Thelaxes suberi, this protein is 3-isopropylmalate dehydrogenase.